Reading from the N-terminus, the 212-residue chain is Pyridoxine/pyridoxamine 5'-phosphate oxidase (212 aa).

Substrate contacts are provided by residues 8-11 (RREY) and lysine 66. Residues 61 to 66 (RIVLLK), 76 to 77 (FT), arginine 82, lysine 83, and glutamine 105 contribute to the FMN site. Positions 123, 127, and 131 each coordinate substrate. FMN is bound by residues 140 to 141 (QS) and tryptophan 185. Position 191–193 (191–193 (RLH)) interacts with substrate. Arginine 195 is an FMN binding site.

The protein belongs to the pyridoxamine 5'-phosphate oxidase family. In terms of assembly, homodimer. The cofactor is FMN.

The catalysed reaction is pyridoxamine 5'-phosphate + O2 + H2O = pyridoxal 5'-phosphate + H2O2 + NH4(+). It catalyses the reaction pyridoxine 5'-phosphate + O2 = pyridoxal 5'-phosphate + H2O2. It functions in the pathway cofactor metabolism; pyridoxal 5'-phosphate salvage; pyridoxal 5'-phosphate from pyridoxamine 5'-phosphate: step 1/1. It participates in cofactor metabolism; pyridoxal 5'-phosphate salvage; pyridoxal 5'-phosphate from pyridoxine 5'-phosphate: step 1/1. Functionally, catalyzes the oxidation of either pyridoxine 5'-phosphate (PNP) or pyridoxamine 5'-phosphate (PMP) into pyridoxal 5'-phosphate (PLP). This Shewanella baltica (strain OS223) protein is Pyridoxine/pyridoxamine 5'-phosphate oxidase.